We begin with the raw amino-acid sequence, 203 residues long: High frequency lysogenization protein HflD homolog (203 aa).

The protein belongs to the HflD family.

Its subcellular location is the cytoplasm. The protein resides in the cell inner membrane. In Vesicomyosocius okutanii subsp. Calyptogena okutanii (strain HA), this protein is High frequency lysogenization protein HflD homolog.